Reading from the N-terminus, the 266-residue chain is Undecaprenyl-diphosphatase (266 aa).

Helical transmembrane passes span 1–21, 39–59, 87–107, 111–131, 149–169, 183–203, 218–238, and 246–266; these read METFQIILLALIQGLTEFLPI, QGFSFDVAVNTGSLLAVVIYF, WWIILATIPAVIFGFAAKDFI, LRNTTVIASTTIIFGLLLWWA, ALLIGFAQALAIIPGTSRSGA, AAAKFSFLMSVPVGLGAAILV, ALGIGMLVSFLAAYACIYYFL, and MTPFVIYRLILGSVLFALILW.

This sequence belongs to the UppP family.

The protein resides in the cell inner membrane. It carries out the reaction di-trans,octa-cis-undecaprenyl diphosphate + H2O = di-trans,octa-cis-undecaprenyl phosphate + phosphate + H(+). Catalyzes the dephosphorylation of undecaprenyl diphosphate (UPP). Confers resistance to bacitracin. In Shewanella denitrificans (strain OS217 / ATCC BAA-1090 / DSM 15013), this protein is Undecaprenyl-diphosphatase.